Here is a 544-residue protein sequence, read N- to C-terminus: Pentatricopeptide repeat-containing protein At1g66345, mitochondrial (544 aa).

The transit peptide at Met1–Tyr116 directs the protein to the mitochondrion. PPR repeat units follow at residues Thr163–Leu197, Ser198–Pro232, Asn233–Pro267, Ser268–Val302, Asp303–Ala337, Asn338–Pro372, Tyr373–Pro407, Ser408–Pro442, Asp443–Pro477, Gly478–Pro512, and Asn513–Arg544.

Belongs to the PPR family. P subfamily.

Its subcellular location is the mitochondrion. The polypeptide is Pentatricopeptide repeat-containing protein At1g66345, mitochondrial (Arabidopsis thaliana (Mouse-ear cress)).